A 385-amino-acid polypeptide reads, in one-letter code: ELAV-like protein 4 (385 aa).

The disordered stretch occupies residues 12-48; it reads TMEPQVSNGPTSNTSNGPSSNNRNCPSPMQTGAATDD. A compositionally biased stretch (low complexity) spans 18 to 33; that stretch reads SNGPTSNTSNGPSSNN. The segment covering 34–44 has biased composition (polar residues); the sequence is RNCPSPMQTGA. The residue at position 38 (Ser38) is a Phosphoserine. RRM domains follow at residues 51-129 and 137-217; these read TNLI…YARP and ANLY…FANN. The residue at position 233 (Ser233) is a Phosphoserine. Arg248 carries the asymmetric dimethylarginine; by CARM1; alternate modification. At Arg248 the chain carries Omega-N-methylarginine; by CARM1; alternate. In terms of domain architecture, RRM 3 spans 302–380; sequence WCIFVYNLSP…RVLQVSFKTN (79 aa).

The protein belongs to the RRM elav family. Component of a TAU mRNP complex, at least composed of IGF2BP1, ELAVL4 and G3BP. Associates with the EIF4F cap-binding complex, composed of EIF4G, EIF4A, EIF4E and PABP. Within the EIF4F cap-binding complex, interacts with EIF4A. Interacts with SMN (via Tudor domain) in an RNA-independent manner; the interaction is required for localization of ELAVL4 to RNA granules. Interacts with MAP1 light chain LC1 (via C-terminus); the interaction contributes to the association of ELAVL4 with microtubules. Interacts with MAP1 light chain LC2. Methylated by CARM1, which leads to reduced RNA-binding activity and enhanced interaction with SMN. Methylation at Arg-248 by CARM1 weakens protective binding to the 3'UTR of CDKN1A mRNA and down-regulates CDKN1A protein expression, thereby maintaining cells in a proliferative state. Methylation is inhibited by NGF, which facilitates neurite outgrowth. In terms of tissue distribution, expressed in the brain, including the hippocampus, and in pancreatic beta cells (at protein level). Expressed in pyramidal neurons of the hippocampal CA3 and CA1 region and in the hilus but not in dentate granule cells (at protein level). Expressed in the dorsal root ganglion and the spinal cord (at protein level). Expressed in neural stem and progenitor cells (at protein level). Expressed in radial glia-like cells and in transient amplifying cells in the subventricular zone (SVZ), and in immature neurons both in the SVZ and the rostral migratory stream as well as in mature neurons in the olfactory bulb (at protein level). Expressed in testis and in the brain, including the hippocampus, the neocortex and the cerebellum. Expressed in lower- but not upper-layer primary neurons of the mature neocortex, in the hippocampal regions CA1-3 and the dentate gyrus. Expressed in the mitral and granule cells of the olfactory bulb, cerebral cortex, entorhinal cortex, thalamus, medial habenula, amygdala, granule cells of the cerebellum, pons, olivary nucleus, dorsal and ventral spinal cord and in dorsal root ganglia. Expressed in motor neurons. Isoform 4: Expressed in the brain. Isoform 5: Expressed in the brain. Isoform 6: Expressed in the brain. Isoform 7: Expressed in the brain. Isoform 8: Expressed in the brain. Isoform 9: Expressed in the brain. Isoform 10: Expressed in the brain. Isoform 11: Expressed in the brain.

It localises to the cytoplasm. It is found in the perikaryon. The protein resides in the cell projection. Its subcellular location is the dendrite. The protein localises to the axon. It localises to the growth cone. Its function is as follows. RNA-binding protein that is involved in the post-transcriptional regulation of mRNAs. Plays a role in the regulation of mRNA stability, alternative splicing and translation. Binds to AU-rich element (ARE) sequences in the 3' untranslated region (3'UTR) of target mRNAs, including GAP43, VEGF, FOS, CDKN1A and ACHE mRNA. Many of the target mRNAs are coding for RNA-binding proteins, transcription factors and proteins involved in RNA processing and/or neuronal development and function. By binding to the mRNA 3'UTR, decreases mRNA deadenylation and thereby contributes to the stabilization of mRNA molecules and their protection from decay. Also binds to the polyadenylated (poly(A)) tail in the 3'UTR of mRNA, thereby increasing its affinity for mRNA binding. Mainly plays a role in neuron-specific RNA processing by stabilization of mRNAs such as GAP43, ACHE and mRNAs of other neuronal proteins, thereby contributing to the differentiation of neural progenitor cells, nervous system development, learning and memory mechanisms. Involved in the negative regulation of the proliferative activity of neuronal stem cells and in the positive regulation of neuronal differentiation of neural progenitor cells. Promotes neuronal differentiation of neural stem/progenitor cells in the adult subventricular zone of the hippocampus by binding to and stabilizing SATB1 mRNA. Binds and stabilizes MSI1 mRNA in neural stem cells. Exhibits increased binding to ACHE mRNA during neuronal differentiation, thereby stabilizing ACHE mRNA and enhancing its expression. Protects CDKN1A mRNA from decay by binding to its 3'-UTR. May bind to APP and BACE1 mRNAS and the BACE1AS lncRNA and enhance their stabilization. Plays a role in neurite outgrowth and in the establishment and maturation of dendritic arbors, thereby contributing to neocortical and hippocampal circuitry function. Stabilizes GAP43 mRNA and protects it from decay during postembryonic development in the brain. By promoting the stabilization of GAP43 mRNA, plays a role in NGF-mediated neurite outgrowth. Binds to BDNF long 3'UTR mRNA, thereby leading to its stabilization and increased dendritic translation after activation of PKC. By increasing translation of BDNF after nerve injury, may contribute to nerve regeneration. Acts as a stabilizing factor by binding to the 3'UTR of NOVA1 mRNA, thereby increasing its translation and enhancing its functional activity in neuron-specific splicing. Stimulates translation of mRNA in a poly(A)- and cap-dependent manner, possibly by associating with the EIF4F cap-binding complex. May also negatively regulate translation by binding to the 5'UTR of Ins2 mRNA, thereby repressing its translation. Upon glucose stimulation, Ins2 mRNA is released from ELAVL4 and translational inhibition is abolished. Also plays a role in the regulation of alternative splicing. May regulate alternative splicing of CALCA pre-mRNA into Calcitonin and Calcitonin gene-related peptide 1 (CGRP) by competing with splicing regulator TIAR for binding to U-rich sequences of CALCA pre-mRNA. This is ELAV-like protein 4 (Elavl4) from Mus musculus (Mouse).